The chain runs to 102 residues: Monothiol glutaredoxin-S9 (102 aa).

The Glutaredoxin domain maps to 1-101 (MDKVVRMSSE…PLVKPFQANL (101 aa)). C21 contributes to the [2Fe-2S] cluster binding site.

Belongs to the glutaredoxin family. CC-type subfamily.

It localises to the cytoplasm. Its function is as follows. May only reduce GSH-thiol disulfides, but not protein disulfides. The protein is Monothiol glutaredoxin-S9 (GRXS9) of Arabidopsis thaliana (Mouse-ear cress).